The following is a 79-amino-acid chain: Submaxillary gland androgen-regulated protein 3B (79 aa).

Residues 1 to 22 (MKSLTWILGLWALAACFTPGES) form the signal peptide. A disordered region spans residues 19–79 (PGESQRGPRG…GIFPPPPPQP (61 aa)). Position 23 is a pyrrolidone carboxylic acid (Q23). Residues 28–79 (GPYPPGPLAPPQPFGPGFVPPPPPPPYGPGRIPPPPPAPYGPGIFPPPPPQP) are compositionally biased toward pro residues.

Belongs to the PROL1/PROL3 family. P-A and D1A are probably degradation products of P-B. In terms of tissue distribution, secreted into saliva by submaxillary gland. Not expressed in heart, brain, lung, liver, skeletal muscle, Kidney, pancreas or placenta.

It localises to the secreted. This is Submaxillary gland androgen-regulated protein 3B (SMR3B) from Homo sapiens (Human).